Here is a 102-residue protein sequence, read N- to C-terminus: Small ribosomal subunit protein uS10 (102 aa).

This sequence belongs to the universal ribosomal protein uS10 family. In terms of assembly, part of the 30S ribosomal subunit.

Its function is as follows. Involved in the binding of tRNA to the ribosomes. This chain is Small ribosomal subunit protein uS10, found in Shouchella clausii (strain KSM-K16) (Alkalihalobacillus clausii).